A 406-amino-acid chain; its full sequence is Bifunctional enzyme IspD/IspF (406 aa).

The tract at residues 1–247 (MSLIRVNGEA…AFFFNPAKDT (247 aa)) is 2-C-methyl-D-erythritol 4-phosphate cytidylyltransferase. Positions 248 to 406 (FIGMGFDTHA…HVSMRYKQKL (159 aa)) are 2-C-methyl-D-erythritol 2,4-cyclodiphosphate synthase. 2 residues coordinate a divalent metal cation: D254 and H256. 4-CDP-2-C-methyl-D-erythritol 2-phosphate contacts are provided by residues 254–256 (DTH) and 280–281 (HS). An a divalent metal cation-binding site is contributed by H288. Residues 302–304 (DIG), 307–311 (FPDND), 378–381 (TTME), F385, and K388 each bind 4-CDP-2-C-methyl-D-erythritol 2-phosphate.

The protein in the N-terminal section; belongs to the IspD/TarI cytidylyltransferase family. IspD subfamily. It in the C-terminal section; belongs to the IspF family. The cofactor is a divalent metal cation.

It carries out the reaction 2-C-methyl-D-erythritol 4-phosphate + CTP + H(+) = 4-CDP-2-C-methyl-D-erythritol + diphosphate. It catalyses the reaction 4-CDP-2-C-methyl-D-erythritol 2-phosphate = 2-C-methyl-D-erythritol 2,4-cyclic diphosphate + CMP. The protein operates within isoprenoid biosynthesis; isopentenyl diphosphate biosynthesis via DXP pathway; isopentenyl diphosphate from 1-deoxy-D-xylulose 5-phosphate: step 2/6. It functions in the pathway isoprenoid biosynthesis; isopentenyl diphosphate biosynthesis via DXP pathway; isopentenyl diphosphate from 1-deoxy-D-xylulose 5-phosphate: step 4/6. In terms of biological role, bifunctional enzyme that catalyzes the formation of 4-diphosphocytidyl-2-C-methyl-D-erythritol from CTP and 2-C-methyl-D-erythritol 4-phosphate (MEP) (IspD), and catalyzes the conversion of 4-diphosphocytidyl-2-C-methyl-D-erythritol 2-phosphate (CDP-ME2P) to 2-C-methyl-D-erythritol 2,4-cyclodiphosphate (ME-CPP) with a corresponding release of cytidine 5-monophosphate (CMP) (IspF). In Helicobacter pylori (strain G27), this protein is Bifunctional enzyme IspD/IspF.